Reading from the N-terminus, the 60-residue chain is UPF0181 protein ESA_01442 (60 aa).

The protein belongs to the UPF0181 family.

The polypeptide is UPF0181 protein ESA_01442 (Cronobacter sakazakii (strain ATCC BAA-894) (Enterobacter sakazakii)).